The following is a 519-amino-acid chain: O-fucosyltransferase 31 (519 aa).

A helical; Signal-anchor for type II membrane protein membrane pass occupies residues 18–38 (ALAGVFVLLFPILYPNLFSPL). N-linked (GlcNAc...) asparagine glycosylation occurs at N131. Residue 302–304 (HLR) participates in substrate binding. N-linked (GlcNAc...) asparagine glycosylation is found at N373 and N474.

It belongs to the glycosyltransferase GT106 family.

The protein localises to the membrane. It participates in glycan metabolism. This is O-fucosyltransferase 31 from Arabidopsis thaliana (Mouse-ear cress).